A 349-amino-acid chain; its full sequence is Hypoxia-inducible factor 1-alpha inhibitor (349 aa).

The span at 1 to 10 (MAATAAEAVA) shows a compositional bias: low complexity. Residues 1–51 (MAATAAEAVASGSGEPREEAGALGPAWDESQLRSYSFPTRPIPRLSQSDPR) form a disordered region. Position 2 is an N-acetylalanine (alanine 2). The segment at 2–125 (AATAAEAVAS…PRSNREEMKF (124 aa)) is interaction with VHL. Residues 142 to 312 (ERLYLQQTLN…PKRIEYPLKA (171 aa)) form the JmjC domain. Residue tyrosine 145 participates in 2-oxoglutarate binding. Residues aspartate 152 and 181-183 (QLT) contribute to the substrate site. Residue threonine 196 participates in 2-oxoglutarate binding. Fe cation-binding residues include histidine 199 and aspartate 201. 201–203 (DEQ) lines the substrate pocket. 2-oxoglutarate contacts are provided by asparagine 205 and lysine 214. 238 to 239 (RQ) serves as a coordination point for substrate. Residue histidine 279 coordinates Fe cation. A 2-oxoglutarate-binding site is contributed by asparagine 294. Residues alanine 300 and asparagine 321 each coordinate substrate.

Homodimer; homodimerization is essential for catalytic activity. Interacts with VHL and HIF1A. Part of a complex with VHL, HIF1A and HDAC1 or HDAC2 or HDAC3. Interacts with NFKB1 and NFKBIA. Interacts with NOTCH1, NOTCH2 and NOTCH3 but not with NOTCH4. Interacts with APBA3; binding inhibits HIF1AN binding to HIF1A. Interacts with TNKS2. Interacts with PPP1R12A. Interacts with ASB4. Interacts with UBE3A. Interacts with ANKS3. Interacts with NECAB3; the interaction is indirect and seems to be mediated by APBA3. It depends on Fe(2+) as a cofactor.

The protein resides in the nucleus. It is found in the cytoplasm. Its subcellular location is the perinuclear region. The enzyme catalyses L-asparaginyl-[hypoxia-inducible factor alpha subunit] + 2-oxoglutarate + O2 = (3S)-3-hydroxy-L-asparaginyl-[hypoxia-inducible factor alpha subunit] + succinate + CO2. The catalysed reaction is L-histidyl-[ankyrin-repeat domain protein] + 2-oxoglutarate + O2 = (3S)-3-hydroxy-L-histidyl-[ankyrin-repeat domain protein] + succinate + CO2. It carries out the reaction L-asparaginyl-[ankyrin-repeat domain protein] + 2-oxoglutarate + O2 = (3S)-3-hydroxy-L-asparaginyl-[ankyrin-repeat domain protein] + succinate + CO2. It catalyses the reaction L-aspartyl-[ankyrin-repeat domain protein] + 2-oxoglutarate + O2 = (3S)-3-hydroxy-L-aspartyl-[ankyrin-repeat domain protein] + succinate + CO2. Hydroxylates HIF-1 alpha at 'Asn-803' in the C-terminal transactivation domain (CAD). Functions as an oxygen sensor and, under normoxic conditions, the hydroxylation prevents interaction of HIF-1 with transcriptional coactivators including Cbp/p300-interacting transactivator. Involved in transcriptional repression through interaction with HIF1A, VHL and histone deacetylases. Hydroxylates specific Asn residues within ankyrin repeat domains (ARD) of NFKB1, NFKBIA, NOTCH1, ASB4, PPP1R12A and several other ARD-containing proteins. Also hydroxylates Asp and His residues within ARDs of ANK1 and TNKS2, respectively. Negatively regulates NOTCH1 activity, accelerating myogenic differentiation. Positively regulates ASB4 activity, promoting vascular differentiation. The chain is Hypoxia-inducible factor 1-alpha inhibitor (HIF1AN) from Homo sapiens (Human).